The following is a 117-amino-acid chain: UPF0251 protein DehaBAV1_0135 (117 aa).

This sequence belongs to the UPF0251 family.

In Dehalococcoides mccartyi (strain ATCC BAA-2100 / JCM 16839 / KCTC 5957 / BAV1), this protein is UPF0251 protein DehaBAV1_0135.